Reading from the N-terminus, the 88-residue chain is Small ribosomal subunit protein bS20 (88 aa).

The protein belongs to the bacterial ribosomal protein bS20 family.

Functionally, binds directly to 16S ribosomal RNA. In Rhodospirillum rubrum (strain ATCC 11170 / ATH 1.1.1 / DSM 467 / LMG 4362 / NCIMB 8255 / S1), this protein is Small ribosomal subunit protein bS20.